The sequence spans 246 residues: AA9 family lytic polysaccharide monooxygenase D (246 aa).

Positions 1–19 (MHLLSLLFPVIALIPTVLS) are cleaved as a signal peptide. Residue H20 coordinates Cu(2+). C78 and C196 form a disulfide bridge. N86, N141, and N156 each carry an N-linked (GlcNAc...) asparagine glycan. 2 residues coordinate O2: H182 and Q191. A Cu(2+)-binding site is contributed by Y193. N-linked (GlcNAc...) asparagine glycosylation is present at N235.

Belongs to the polysaccharide monooxygenase AA9 family. Requires Cu(2+) as cofactor.

The protein resides in the secreted. It catalyses the reaction [(1-&gt;4)-beta-D-glucosyl]n+m + reduced acceptor + O2 = 4-dehydro-beta-D-glucosyl-[(1-&gt;4)-beta-D-glucosyl]n-1 + [(1-&gt;4)-beta-D-glucosyl]m + acceptor + H2O.. Its function is as follows. Lytic polysaccharide monooxygenase (LPMO) that depolymerizes crystalline and amorphous polysaccharides via the oxidation of scissile alpha- or beta-(1-4)-glycosidic bonds, yielding C1 and C4 oxidation products. Catalysis by LPMOs requires the reduction of the active-site copper from Cu(II) to Cu(I) by a reducing agent and H(2)O(2) or O(2) as a cosubstrate. The sequence is that of AA9 family lytic polysaccharide monooxygenase D from Botryotinia fuckeliana (strain B05.10) (Noble rot fungus).